The sequence spans 165 residues: Small ribosomal subunit protein uS5 (165 aa).

The S5 DRBM domain maps to 13-76 (LEEKVLVVNR…EAAKKNLMKI (64 aa)).

The protein belongs to the universal ribosomal protein uS5 family. Part of the 30S ribosomal subunit. Contacts proteins S4 and S8.

Its function is as follows. With S4 and S12 plays an important role in translational accuracy. Located at the back of the 30S subunit body where it stabilizes the conformation of the head with respect to the body. The chain is Small ribosomal subunit protein uS5 from Chlamydia pneumoniae (Chlamydophila pneumoniae).